The following is a 422-amino-acid chain: Metallocarboxypeptidase A (422 aa).

The first 17 residues, 1–17 (MRSVLSLALLAANVVTA), serve as a signal peptide directing secretion. A propeptide spans 18 to 112 (AVVSPFDYSG…FEAYSAGYAP (95 aa)) (activation peptide). The Peptidase M14 domain maps to 119–419 (SYHSYQDHIS…AGTVAMLKAV (301 aa)). His179 and Glu182 together coordinate Zn(2+). Residues 179-182 (HARE), Arg237, and 254-255 (NR) contribute to the substrate site. A disulfide bridge links Cys248 with Cys271. Zn(2+) is bound at residue His309. 310-311 (SY) is a binding site for substrate. The active-site Proton donor/acceptor is the Glu385.

Belongs to the peptidase M14 family. Zn(2+) serves as cofactor.

The protein localises to the secreted. Extracellular metalloprotease that contributes to pathogenicity. This chain is Metallocarboxypeptidase A (MCPA), found in Trichophyton tonsurans (Scalp ringworm fungus).